We begin with the raw amino-acid sequence, 434 residues long: Glutamate-1-semialdehyde 2,1-aminomutase (434 aa).

At Lys266 the chain carries N6-(pyridoxal phosphate)lysine.

This sequence belongs to the class-III pyridoxal-phosphate-dependent aminotransferase family. HemL subfamily. Homodimer. Pyridoxal 5'-phosphate is required as a cofactor.

The protein resides in the cytoplasm. The catalysed reaction is (S)-4-amino-5-oxopentanoate = 5-aminolevulinate. Its pathway is porphyrin-containing compound metabolism; protoporphyrin-IX biosynthesis; 5-aminolevulinate from L-glutamyl-tRNA(Glu): step 2/2. The chain is Glutamate-1-semialdehyde 2,1-aminomutase from Fusobacterium nucleatum subsp. nucleatum (strain ATCC 25586 / DSM 15643 / BCRC 10681 / CIP 101130 / JCM 8532 / KCTC 2640 / LMG 13131 / VPI 4355).